A 503-amino-acid chain; its full sequence is Glycerol kinase (503 aa).

Thr14 is a binding site for ADP. ATP contacts are provided by Thr14, Thr15, and Ser16. Thr14 lines the sn-glycerol 3-phosphate pocket. Arg18 lines the ADP pocket. Arg84, Glu85, Tyr136, and Asp246 together coordinate sn-glycerol 3-phosphate. Glycerol-binding residues include Arg84, Glu85, Tyr136, Asp246, and Gln247. ADP contacts are provided by Thr268 and Gly311. ATP-binding residues include Thr268, Gly311, Gln315, and Gly412. Positions 412 and 416 each coordinate ADP.

The protein belongs to the FGGY kinase family.

It carries out the reaction glycerol + ATP = sn-glycerol 3-phosphate + ADP + H(+). The protein operates within polyol metabolism; glycerol degradation via glycerol kinase pathway; sn-glycerol 3-phosphate from glycerol: step 1/1. Inhibited by fructose 1,6-bisphosphate (FBP). In terms of biological role, key enzyme in the regulation of glycerol uptake and metabolism. Catalyzes the phosphorylation of glycerol to yield sn-glycerol 3-phosphate. This is Glycerol kinase from Haemophilus influenzae (strain 86-028NP).